Reading from the N-terminus, the 74-residue chain is Protein RALF-like 25 (74 aa).

Residues 1 to 22 form the signal peptide; the sequence is MKTFMIILLVICSILIVGRVEA. Disulfide bonds link Cys35-Cys44 and Cys62-Cys68.

This sequence belongs to the plant rapid alkalinization factor (RALF) family.

It is found in the secreted. Functionally, cell signaling peptide that may regulate plant stress, growth, and development. Mediates a rapid alkalinization of extracellular space by mediating a transient increase in the cytoplasmic Ca(2+) concentration leading to a calcium-dependent signaling events through a cell surface receptor and a concomitant activation of some intracellular mitogen-activated protein kinases. In Arabidopsis thaliana (Mouse-ear cress), this protein is Protein RALF-like 25 (RALFL25).